The sequence spans 375 residues: Actin, cytoplasmic (375 aa).

It belongs to the actin family.

The protein localises to the cytoplasm. The protein resides in the cytoskeleton. The catalysed reaction is ATP + H2O = ADP + phosphate + H(+). Actins are highly conserved proteins that are involved in various types of cell motility and are ubiquitously expressed in all eukaryotic cells. This Oxytricha trifallax (Sterkiella histriomuscorum) protein is Actin, cytoplasmic.